The primary structure comprises 79 residues: Cytochrome b (79 aa).

The next 3 membrane-spanning stretches (helical) occupy residues 1–7 (TALFLAM), 31–52 (WLIRNMHANGASFFFICIYLHI), and 67–79 (WNVGVVLLLLTMM). Positions 37 and 51 each coordinate heme b.

The protein belongs to the cytochrome b family. As to quaternary structure, the cytochrome bc1 complex contains 3 respiratory subunits (MT-CYB, CYC1 and UQCRFS1), 2 core proteins (UQCRC1 and UQCRC2) and probably 6 low-molecular weight proteins. Requires heme b as cofactor.

The protein resides in the mitochondrion inner membrane. Its function is as follows. Component of the ubiquinol-cytochrome c reductase complex (complex III or cytochrome b-c1 complex) that is part of the mitochondrial respiratory chain. The b-c1 complex mediates electron transfer from ubiquinol to cytochrome c. Contributes to the generation of a proton gradient across the mitochondrial membrane that is then used for ATP synthesis. In Amphilophus citrinellus (Midas cichlid), this protein is Cytochrome b (mt-cyb).